The sequence spans 306 residues: Ribonuclease Z (306 aa).

Residues H63, H65, D67, H68, H140, D211, and H269 each coordinate Zn(2+). D67 acts as the Proton acceptor in catalysis.

It belongs to the RNase Z family. As to quaternary structure, homodimer. Requires Zn(2+) as cofactor.

The enzyme catalyses Endonucleolytic cleavage of RNA, removing extra 3' nucleotides from tRNA precursor, generating 3' termini of tRNAs. A 3'-hydroxy group is left at the tRNA terminus and a 5'-phosphoryl group is left at the trailer molecule.. Zinc phosphodiesterase, which displays some tRNA 3'-processing endonuclease activity. Probably involved in tRNA maturation, by removing a 3'-trailer from precursor tRNA. This is Ribonuclease Z from Listeria monocytogenes serotype 4b (strain CLIP80459).